The sequence spans 599 residues: Histone-arginine methyltransferase CARMER (599 aa).

One can recognise an SAM-dependent MTase PRMT-type domain in the interval 127-434; the sequence is ASQYFQFYGY…QRQSYDVEID (308 aa). Residues Q140, R149, G173, E195, E224, and T252 each coordinate S-adenosyl-L-methionine. The residue at position 487 (R487) is an Asymmetric dimethylarginine; by autocatalysis.

This sequence belongs to the class I-like SAM-binding methyltransferase superfamily. Protein arginine N-methyltransferase family. In terms of assembly, homodimer. The dimethylated protein is the major form.

It is found in the cytoplasm. The protein localises to the nucleus. The catalysed reaction is L-arginyl-[protein] + 2 S-adenosyl-L-methionine = N(omega),N(omega)-dimethyl-L-arginyl-[protein] + 2 S-adenosyl-L-homocysteine + 2 H(+). Its function is as follows. Methylates (mono- and asymmetric dimethylation) the guanidino nitrogens of arginyl residues in proteins. May methylate histone H3 at 'Arg-17' and activate transcription via chromatin remodeling. The chain is Histone-arginine methyltransferase CARMER (Art4) from Culex quinquefasciatus (Southern house mosquito).